We begin with the raw amino-acid sequence, 125 residues long: Protein JAZ13 (125 aa).

An EAR motif is present at residues 6 to 10 (LDLHL). The disordered stretch occupies residues 99 to 125 (KKRSKSFTLTPNYTSSTSSSSSSLHNF). Over residues 112-125 (TSSTSSSSSSLHNF) the composition is skewed to low complexity.

As to quaternary structure, monomer. Lack of homodimerization, and very weak or no interaction with AFPH2/NINJA and other JAZ proteins. Interacts (via EAR motif) with TPL. Interacts (via jas motif) with MYC2. Post-translationally, phosphorylated at multiple serine residues.

In terms of biological role, non-TIFY functional repressor of jasmonate (JA)-mediated growth and defense responses. Intrinsically resistant to JA-induced turnover, probably due to the absence of the canonical degron that strongly interacts with COI1 in the presence of JA-Ile in the TIFY/JAZ proteins. The polypeptide is Protein JAZ13 (Arabidopsis thaliana (Mouse-ear cress)).